Reading from the N-terminus, the 444-residue chain is Enolase (444 aa).

The substrate site is built by His-163 and Glu-172. The Proton donor role is filled by Glu-215. 3 residues coordinate Mg(2+): Asp-250, Glu-300, and Asp-327. Positions 300 and 327 each coordinate substrate. Residue Lys-352 is the Proton acceptor of the active site. Residues 379 to 382 and Lys-403 contribute to the substrate site; that span reads SHRS.

This sequence belongs to the enolase family. As to quaternary structure, homodimer. The cofactor is Mg(2+).

Its subcellular location is the cytoplasm. The catalysed reaction is (2R)-2-phosphoglycerate = phosphoenolpyruvate + H2O. Its pathway is carbohydrate degradation; glycolysis; pyruvate from D-glyceraldehyde 3-phosphate: step 4/5. The protein is Enolase (PGH1) of Mesembryanthemum crystallinum (Common ice plant).